Consider the following 948-residue polypeptide: UvrABC system protein A (948 aa).

Gly33–Ser40 contributes to the ATP binding site. The segment at Cys252 to Cys279 adopts a C4-type zinc-finger fold. 2 ABC transporter domains span residues Trp309–Leu587 and Ala607–Lys935. Gly639–Ser646 lines the ATP pocket. The C4-type zinc-finger motif lies at Cys738–Cys764.

This sequence belongs to the ABC transporter superfamily. UvrA family. Forms a heterotetramer with UvrB during the search for lesions.

The protein localises to the cytoplasm. Functionally, the UvrABC repair system catalyzes the recognition and processing of DNA lesions. UvrA is an ATPase and a DNA-binding protein. A damage recognition complex composed of 2 UvrA and 2 UvrB subunits scans DNA for abnormalities. When the presence of a lesion has been verified by UvrB, the UvrA molecules dissociate. The polypeptide is UvrABC system protein A (Staphylococcus aureus (strain MSSA476)).